Reading from the N-terminus, the 582-residue chain is Glutamine--tRNA ligase (582 aa).

A 'HIGH' region motif is present at residues 50–60 (PEPNGYLHIGH). ATP is bound by residues 51–53 (EPN) and 57–63 (HIGHAKS). The L-glutamine site is built by D83 and Y235. ATP is bound by residues T254 and 289 to 290 (RL). Positions 296 to 300 (ITSKR) match the 'KMSKS' region motif.

The protein belongs to the class-I aminoacyl-tRNA synthetase family. As to quaternary structure, monomer.

The protein resides in the cytoplasm. It catalyses the reaction tRNA(Gln) + L-glutamine + ATP = L-glutaminyl-tRNA(Gln) + AMP + diphosphate. This chain is Glutamine--tRNA ligase, found in Cupriavidus metallidurans (strain ATCC 43123 / DSM 2839 / NBRC 102507 / CH34) (Ralstonia metallidurans).